Here is a 278-residue protein sequence, read N- to C-terminus: 2-dehydro-3-deoxyphosphooctonate aldolase (278 aa).

It belongs to the KdsA family.

It localises to the cytoplasm. The enzyme catalyses D-arabinose 5-phosphate + phosphoenolpyruvate + H2O = 3-deoxy-alpha-D-manno-2-octulosonate-8-phosphate + phosphate. Its pathway is carbohydrate biosynthesis; 3-deoxy-D-manno-octulosonate biosynthesis; 3-deoxy-D-manno-octulosonate from D-ribulose 5-phosphate: step 2/3. The protein operates within bacterial outer membrane biogenesis; lipopolysaccharide biosynthesis. In Dechloromonas aromatica (strain RCB), this protein is 2-dehydro-3-deoxyphosphooctonate aldolase.